Consider the following 298-residue polypeptide: MGLCKCPKRLVTNQFCFEHRVNVCEHCMVQSHPKCIVQSYLQWLRDSDYISNCTLCGTTLEQGDCVRLVCYHVFHWDCLNARQAALPANTAPRGHQCPACTVEIFPNANLVSPVADALKSFLSQVNWGRNGLGLALLSEEQNSLKAIKPKVASQSAVSNMTKVHHIHSGGERERTKPNGHDAVSPHSVLLMDAFNPPSAGDYASSRRPLLPRQSPIGGTDRDDNKYQRRTPAELFSRWTRRFYAPSSRPPWRRTWFLVTAGILAFVLFVYLMAWLGRGGSDAVDEGWNNPNPQPNHYE.

The B box-type; degenerate zinc finger occupies 1–43; sequence MGLCKCPKRLVTNQFCFEHRVNVCEHCMVQSHPKCIVQSYLQW. The RING-type; atypical zinc-finger motif lies at 53–101; sequence CTLCGTTLEQGDCVRLVCYHVFHWDCLNARQAALPANTAPRGHQCPACT. Residues 199 to 230 are disordered; that stretch reads AGDYASSRRPLLPRQSPIGGTDRDDNKYQRRT. Ser-214 is subject to Phosphoserine. A helical membrane pass occupies residues 255–275; that stretch reads WFLVTAGILAFVLFVYLMAWL.

The protein belongs to the ZFPL1 family.

It localises to the membrane. This chain is Zinc finger protein-like 1 homolog, found in Drosophila erecta (Fruit fly).